The chain runs to 492 residues: Xaa-Pro dipeptidase (492 aa).

N-acetylalanine is present on alanine 2. The residue at position 167 (serine 167) is a Phosphoserine. An a dipeptide-binding site is contributed by histidine 255. Mn(2+) contacts are provided by aspartate 276, aspartate 287, and histidine 370. A dipeptide is bound at residue aspartate 287. A dipeptide is bound by residues histidine 377 and arginine 398. Residues glutamate 412 and glutamate 452 each coordinate Mn(2+).

This sequence belongs to the peptidase M24B family. Eukaryotic-type prolidase subfamily. In terms of assembly, homodimer. It depends on Mn(2+) as a cofactor.

It catalyses the reaction Xaa-L-Pro dipeptide + H2O = an L-alpha-amino acid + L-proline. Dipeptidase that catalyzes the hydrolysis of dipeptides with a prolyl (Xaa-Pro) or hydroxyprolyl residue in the C-terminal position. The preferred dipeptide substrate is Gly-Pro, but other Xaa-Pro dipeptides, such as Ala-Pro, Met-Pro, Phe-Pro, Val-Pro and Leu-Pro, can be cleaved. Plays an important role in collagen metabolism because the high level of iminoacids in collagen. The sequence is that of Xaa-Pro dipeptidase (Pepd) from Rattus norvegicus (Rat).